A 230-amino-acid polypeptide reads, in one-letter code: uncharacterized protein (230 aa).

It belongs to the transferase hexapeptide repeat family.

This is an uncharacterized protein from Escherichia coli (strain K12).